Here is a 353-residue protein sequence, read N- to C-terminus: UDP-N-acetylglucosamine--N-acetylmuramyl-(pentapeptide) pyrophosphoryl-undecaprenol N-acetylglucosamine transferase (353 aa).

Residues 10 to 12 (TGG), asparagine 124, serine 183, and glutamine 283 each bind UDP-N-acetyl-alpha-D-glucosamine.

Belongs to the glycosyltransferase 28 family. MurG subfamily.

The protein resides in the cell inner membrane. The catalysed reaction is di-trans,octa-cis-undecaprenyl diphospho-N-acetyl-alpha-D-muramoyl-L-alanyl-D-glutamyl-meso-2,6-diaminopimeloyl-D-alanyl-D-alanine + UDP-N-acetyl-alpha-D-glucosamine = di-trans,octa-cis-undecaprenyl diphospho-[N-acetyl-alpha-D-glucosaminyl-(1-&gt;4)]-N-acetyl-alpha-D-muramoyl-L-alanyl-D-glutamyl-meso-2,6-diaminopimeloyl-D-alanyl-D-alanine + UDP + H(+). Its pathway is cell wall biogenesis; peptidoglycan biosynthesis. Its function is as follows. Cell wall formation. Catalyzes the transfer of a GlcNAc subunit on undecaprenyl-pyrophosphoryl-MurNAc-pentapeptide (lipid intermediate I) to form undecaprenyl-pyrophosphoryl-MurNAc-(pentapeptide)GlcNAc (lipid intermediate II). This Helicobacter pylori (strain P12) protein is UDP-N-acetylglucosamine--N-acetylmuramyl-(pentapeptide) pyrophosphoryl-undecaprenol N-acetylglucosamine transferase.